Here is a 195-residue protein sequence, read N- to C-terminus: MELPVRLVVGLGNPGEKYASTRHNVGFDWLDRLASSQRVAFTLETRFRGLCARIMLADTDIWLLKPQTYMNASGMSVAAVCRYYKIVPEQMLVVHDELDLQPGVIKLKSGGGTGGHNGLKSIVADLSSQVFWRLRIGVGHPGDRNQVVDYVLHPPRREEAALIDEAIDHSMQVWPLIARGDFAAAMQRLHTRQEN.

A tRNA-binding site is contributed by Tyr18. His23 serves as the catalytic Proton acceptor. The tRNA site is built by Tyr69, Asn71, and Asn117.

The protein belongs to the PTH family. Monomer.

The protein resides in the cytoplasm. The enzyme catalyses an N-acyl-L-alpha-aminoacyl-tRNA + H2O = an N-acyl-L-amino acid + a tRNA + H(+). Its function is as follows. Hydrolyzes ribosome-free peptidyl-tRNAs (with 1 or more amino acids incorporated), which drop off the ribosome during protein synthesis, or as a result of ribosome stalling. Catalyzes the release of premature peptidyl moieties from peptidyl-tRNA molecules trapped in stalled 50S ribosomal subunits, and thus maintains levels of free tRNAs and 50S ribosomes. The chain is Peptidyl-tRNA hydrolase from Nitrosomonas europaea (strain ATCC 19718 / CIP 103999 / KCTC 2705 / NBRC 14298).